Consider the following 221-residue polypeptide: ATP-dependent Clp protease proteolytic subunit 3 (221 aa).

Residue Ser-118 is the Nucleophile of the active site. His-143 is an active-site residue.

This sequence belongs to the peptidase S14 family. In terms of assembly, fourteen ClpP subunits assemble into 2 heptameric rings which stack back to back to give a disk-like structure with a central cavity, resembling the structure of eukaryotic proteasomes.

Its subcellular location is the cytoplasm. It catalyses the reaction Hydrolysis of proteins to small peptides in the presence of ATP and magnesium. alpha-casein is the usual test substrate. In the absence of ATP, only oligopeptides shorter than five residues are hydrolyzed (such as succinyl-Leu-Tyr-|-NHMec, and Leu-Tyr-Leu-|-Tyr-Trp, in which cleavage of the -Tyr-|-Leu- and -Tyr-|-Trp bonds also occurs).. Functionally, cleaves peptides in various proteins in a process that requires ATP hydrolysis. Has a chymotrypsin-like activity. Plays a major role in the degradation of misfolded proteins. In Nocardia farcinica (strain IFM 10152), this protein is ATP-dependent Clp protease proteolytic subunit 3.